The sequence spans 273 residues: Glutamate racemase (273 aa).

Residues 7 to 8 and 39 to 40 each bind substrate; these read DS and YG. Cysteine 70 (proton donor/acceptor) is an active-site residue. A substrate-binding site is contributed by 71–72; sequence NT. The active-site Proton donor/acceptor is the cysteine 194. 195 to 196 serves as a coordination point for substrate; sequence TH.

The protein belongs to the aspartate/glutamate racemases family.

It catalyses the reaction L-glutamate = D-glutamate. It functions in the pathway cell wall biogenesis; peptidoglycan biosynthesis. In terms of biological role, provides the (R)-glutamate required for cell wall biosynthesis. The protein is Glutamate racemase of Dinoroseobacter shibae (strain DSM 16493 / NCIMB 14021 / DFL 12).